Here is a 251-residue protein sequence, read N- to C-terminus: 5-oxoprolinase subunit A 3 (251 aa).

Belongs to the LamB/PxpA family. As to quaternary structure, forms a complex composed of PxpA, PxpB and PxpC.

It carries out the reaction 5-oxo-L-proline + ATP + 2 H2O = L-glutamate + ADP + phosphate + H(+). Catalyzes the cleavage of 5-oxoproline to form L-glutamate coupled to the hydrolysis of ATP to ADP and inorganic phosphate. The sequence is that of 5-oxoprolinase subunit A 3 from Pseudomonas aeruginosa (strain ATCC 15692 / DSM 22644 / CIP 104116 / JCM 14847 / LMG 12228 / 1C / PRS 101 / PAO1).